A 448-amino-acid polypeptide reads, in one-letter code: Trigger factor (448 aa).

In terms of domain architecture, PPIase FKBP-type spans 161–246 (GDQVTIDFEG…VHKVAGKQLP (86 aa)). A disordered region spans residues 428 to 448 (ALQAAQQQEGAEEEAQEETSA). Residues 437-448 (GAEEEAQEETSA) are compositionally biased toward acidic residues.

The protein belongs to the FKBP-type PPIase family. Tig subfamily.

Its subcellular location is the cytoplasm. The catalysed reaction is [protein]-peptidylproline (omega=180) = [protein]-peptidylproline (omega=0). Functionally, involved in protein export. Acts as a chaperone by maintaining the newly synthesized protein in an open conformation. Functions as a peptidyl-prolyl cis-trans isomerase. This is Trigger factor from Chromohalobacter salexigens (strain ATCC BAA-138 / DSM 3043 / CIP 106854 / NCIMB 13768 / 1H11).